We begin with the raw amino-acid sequence, 160 residues long: Type IV major fimbrial protein FimA (160 aa).

A propeptide spans 1 to 7 (leader sequence); that stretch reads MKSLQKG. F8 carries the N-methylphenylalanine modification. A helical transmembrane segment spans residues 8–28; the sequence is FTLIELMIVVAIIGILAAFAI. C63 and C106 are disulfide-bonded.

It belongs to the N-Me-Phe pilin family. The pili are polar flexible filaments of about 5.4 nanometers diameter and 2.5 micrometers average length; they consist of only a single polypeptide chain arranged in a helical configuration of five subunits per turn in the assembled pilus.

It is found in the fimbrium. Its subcellular location is the membrane. Functionally, major component of the type IV fimbriae that plays an essential role in twitching motility, natural transformation, and protease secretion. In Dichelobacter nodosus (Bacteroides nodosus), this protein is Type IV major fimbrial protein FimA (fimA).